A 305-amino-acid chain; its full sequence is Methionyl-tRNA formyltransferase (305 aa).

(6S)-5,6,7,8-tetrahydrofolate is bound at residue 110 to 113; it reads SLLP.

The protein belongs to the Fmt family.

The catalysed reaction is L-methionyl-tRNA(fMet) + (6R)-10-formyltetrahydrofolate = N-formyl-L-methionyl-tRNA(fMet) + (6S)-5,6,7,8-tetrahydrofolate + H(+). Functionally, attaches a formyl group to the free amino group of methionyl-tRNA(fMet). The formyl group appears to play a dual role in the initiator identity of N-formylmethionyl-tRNA by promoting its recognition by IF2 and preventing the misappropriation of this tRNA by the elongation apparatus. The chain is Methionyl-tRNA formyltransferase from Ureaplasma parvum serovar 3 (strain ATCC 700970).